The chain runs to 178 residues: CASP-like protein 4D1 (178 aa).

An N-acetylalanine modification is found at Ala2. The Cytoplasmic segment spans residues 2-14 (APPPPAPPSVTLR). The chain crosses the membrane as a helical span at residues 15 to 35 (TVLLLLRVLTAAFLLITVVLI). Over 36–60 (STNTVTLEISSTSIKLPFNDVYAYR) the chain is Extracellular. The helical transmembrane segment at 61 to 81 (YMLSAAVIGLVYAVVQLFLTI) threads the bilayer. Over 82-97 (SQFATGKTHPLTYQFD) the chain is Cytoplasmic. Residues 98–118 (FYGDKVISYLLATGSAAGFGV) traverse the membrane as a helical segment. The Extracellular portion of the chain corresponds to 119 to 149 (SKDLKDTYIALIEFDSTDPVDKFFSKGYASA). The helical transmembrane segment at 150–170 (SLLLFAFVSLAVLSVFSSLAL) threads the bilayer. At 171–178 (SKRPVPVS) the chain is on the cytoplasmic side.

This sequence belongs to the Casparian strip membrane proteins (CASP) family. In terms of assembly, homodimer and heterodimers. Expressed in the root epidermis.

It localises to the cell membrane. The protein is CASP-like protein 4D1 of Arabidopsis thaliana (Mouse-ear cress).